A 396-amino-acid polypeptide reads, in one-letter code: 1-deoxy-D-xylulose 5-phosphate reductoisomerase (396 aa).

NADPH is bound by residues threonine 13, glycine 14, serine 15, isoleucine 16, and asparagine 127. 1-deoxy-D-xylulose 5-phosphate is bound at residue lysine 128. Glutamate 129 lines the NADPH pocket. Aspartate 153 lines the Mn(2+) pocket. 4 residues coordinate 1-deoxy-D-xylulose 5-phosphate: serine 154, glutamate 155, serine 184, and histidine 207. Mn(2+) is bound at residue glutamate 155. Glycine 213 lines the NADPH pocket. Positions 220, 225, 226, and 229 each coordinate 1-deoxy-D-xylulose 5-phosphate. Glutamate 229 is a binding site for Mn(2+).

This sequence belongs to the DXR family. Mg(2+) serves as cofactor. Requires Mn(2+) as cofactor.

The catalysed reaction is 2-C-methyl-D-erythritol 4-phosphate + NADP(+) = 1-deoxy-D-xylulose 5-phosphate + NADPH + H(+). It functions in the pathway isoprenoid biosynthesis; isopentenyl diphosphate biosynthesis via DXP pathway; isopentenyl diphosphate from 1-deoxy-D-xylulose 5-phosphate: step 1/6. Functionally, catalyzes the NADPH-dependent rearrangement and reduction of 1-deoxy-D-xylulose-5-phosphate (DXP) to 2-C-methyl-D-erythritol 4-phosphate (MEP). The polypeptide is 1-deoxy-D-xylulose 5-phosphate reductoisomerase (Pseudomonas syringae pv. syringae (strain B728a)).